A 612-amino-acid chain; its full sequence is Elongation factor 4 (612 aa).

Residues 11-193 (KHIRNFAIVA…KVVKDIPAPS (183 aa)) enclose the tr-type G domain. GTP contacts are provided by residues 23-28 (DHGKST) and 140-143 (NKID).

It belongs to the TRAFAC class translation factor GTPase superfamily. Classic translation factor GTPase family. LepA subfamily.

The protein localises to the cell membrane. It catalyses the reaction GTP + H2O = GDP + phosphate + H(+). Functionally, required for accurate and efficient protein synthesis under certain stress conditions. May act as a fidelity factor of the translation reaction, by catalyzing a one-codon backward translocation of tRNAs on improperly translocated ribosomes. Back-translocation proceeds from a post-translocation (POST) complex to a pre-translocation (PRE) complex, thus giving elongation factor G a second chance to translocate the tRNAs correctly. Binds to ribosomes in a GTP-dependent manner. In Lactobacillus helveticus (strain DPC 4571), this protein is Elongation factor 4.